Reading from the N-terminus, the 334-residue chain is Ferrochelatase (334 aa).

Fe cation contacts are provided by His207 and Glu288.

It belongs to the ferrochelatase family.

The protein localises to the cytoplasm. It carries out the reaction heme b + 2 H(+) = protoporphyrin IX + Fe(2+). It functions in the pathway porphyrin-containing compound metabolism; protoheme biosynthesis; protoheme from protoporphyrin-IX: step 1/1. Catalyzes the ferrous insertion into protoporphyrin IX. The polypeptide is Ferrochelatase (Helicobacter pylori (strain P12)).